A 535-amino-acid chain; its full sequence is Bifunctional purine biosynthesis protein PurH (535 aa).

In terms of domain architecture, MGS-like spans 6–151 (TRLPVRRALI…KNHKDVAIVV (146 aa)).

This sequence belongs to the PurH family.

It carries out the reaction (6R)-10-formyltetrahydrofolate + 5-amino-1-(5-phospho-beta-D-ribosyl)imidazole-4-carboxamide = 5-formamido-1-(5-phospho-D-ribosyl)imidazole-4-carboxamide + (6S)-5,6,7,8-tetrahydrofolate. The enzyme catalyses IMP + H2O = 5-formamido-1-(5-phospho-D-ribosyl)imidazole-4-carboxamide. It participates in purine metabolism; IMP biosynthesis via de novo pathway; 5-formamido-1-(5-phospho-D-ribosyl)imidazole-4-carboxamide from 5-amino-1-(5-phospho-D-ribosyl)imidazole-4-carboxamide (10-formyl THF route): step 1/1. The protein operates within purine metabolism; IMP biosynthesis via de novo pathway; IMP from 5-formamido-1-(5-phospho-D-ribosyl)imidazole-4-carboxamide: step 1/1. The protein is Bifunctional purine biosynthesis protein PurH of Azotobacter vinelandii (strain DJ / ATCC BAA-1303).